A 232-amino-acid polypeptide reads, in one-letter code: tRNA (guanine-N(7)-)-methyltransferase (232 aa).

Glu38, Asp63, Glu90, and Asp113 together coordinate S-adenosyl-L-methionine. Asp113 is an active-site residue. Substrate contacts are provided by Lys117 and Asp149.

The protein belongs to the class I-like SAM-binding methyltransferase superfamily. TrmB family.

It catalyses the reaction guanosine(46) in tRNA + S-adenosyl-L-methionine = N(7)-methylguanosine(46) in tRNA + S-adenosyl-L-homocysteine. The protein operates within tRNA modification; N(7)-methylguanine-tRNA biosynthesis. Catalyzes the formation of N(7)-methylguanine at position 46 (m7G46) in tRNA. This is tRNA (guanine-N(7)-)-methyltransferase from Syntrophotalea carbinolica (strain DSM 2380 / NBRC 103641 / GraBd1) (Pelobacter carbinolicus).